The chain runs to 247 residues: MGYLKELIKRVPELPVCDVISYVYYGIVPYDLRIKNFYFRDYLRSLTGIYINKYQYTTFAQKITGGNHPKITYKGVTIGYDNVEHYVHVPDLIASLILINYSINAYVGGSKVLFWADSMRSASIFYSLADRVRTPFYTWEKNPEFSDNLETILYLIGYSDVIKRNGGVKVTPAEIERNKKFKTYYFLPTFYTAYYLRNKHTFIESPNVILKVYKEIEPELKVPDIPFSKLVKKANELIKDNAEALFD.

This is an uncharacterized protein from Acidianus bottle-shaped virus (isolate Italy/Pozzuoli) (ABV).